Consider the following 333-residue polypeptide: 5-formaminoimidazole-4-carboxamide-1-(beta)-D-ribofuranosyl 5'-monophosphate synthetase (333 aa).

2 residues coordinate 5-amino-1-(5-phospho-beta-D-ribosyl)imidazole-4-carboxamide: H20 and S85. Positions 106 to 313 constitute an ATP-grasp domain; it reads RELIKWEADQ…YFDRPMDMGE (208 aa). ATP contacts are provided by residues 136 to 187 and E209; that span reads PEEV…VPAY. N229 serves as a coordination point for 5-amino-1-(5-phospho-beta-D-ribosyl)imidazole-4-carboxamide. Residues E268 and E281 each coordinate Mg(2+).

The protein belongs to the phosphohexose mutase family. It depends on Mg(2+) as a cofactor. Mn(2+) is required as a cofactor.

It catalyses the reaction 5-amino-1-(5-phospho-beta-D-ribosyl)imidazole-4-carboxamide + formate + ATP = 5-formamido-1-(5-phospho-D-ribosyl)imidazole-4-carboxamide + ADP + phosphate. Its pathway is purine metabolism; IMP biosynthesis via de novo pathway; 5-formamido-1-(5-phospho-D-ribosyl)imidazole-4-carboxamide from 5-amino-1-(5-phospho-D-ribosyl)imidazole-4-carboxamide (formate route): step 1/1. In terms of biological role, catalyzes the ATP- and formate-dependent formylation of 5-aminoimidazole-4-carboxamide-1-beta-d-ribofuranosyl 5'-monophosphate (AICAR) to 5-formaminoimidazole-4-carboxamide-1-beta-d-ribofuranosyl 5'-monophosphate (FAICAR) in the absence of folates. The sequence is that of 5-formaminoimidazole-4-carboxamide-1-(beta)-D-ribofuranosyl 5'-monophosphate synthetase from Pyrobaculum islandicum (strain DSM 4184 / JCM 9189 / GEO3).